Reading from the N-terminus, the 212-residue chain is Inactive ribonuclease-like protein 10 (212 aa).

An N-terminal signal peptide occupies residues 1–24 (MKLTLVQIFFMMLLLLLGLGVGLG).

Belongs to the pancreatic ribonuclease family. In terms of processing, the N-terminus is blocked. Glycosylated. As to expression, male-specific expression in proximal caput of the epididymis.

The protein resides in the secreted. Its function is as follows. Secreted proximal epididymal protein required for post-testicular sperm maturation and male fertility. May be involved in sperm adhesion to the egg zona pellucida. Does not have ribonuclease activity. The sequence is that of Inactive ribonuclease-like protein 10 (RNASE10) from Ovis aries (Sheep).